The primary structure comprises 322 residues: DNA primase small subunit PriS (322 aa).

Catalysis depends on residues Asp86, Asp88, and Asp226.

Belongs to the eukaryotic-type primase small subunit family. Heterodimer of a small subunit (PriS) and a large subunit (PriL). Mg(2+) is required as a cofactor. It depends on Mn(2+) as a cofactor.

Functionally, catalytic subunit of DNA primase, an RNA polymerase that catalyzes the synthesis of short RNA molecules used as primers for DNA polymerase during DNA replication. The small subunit contains the primase catalytic core and has DNA synthesis activity on its own. Binding to the large subunit stabilizes and modulates the activity, increasing the rate of DNA synthesis while decreasing the length of the DNA fragments, and conferring RNA synthesis capability. The DNA polymerase activity may enable DNA primase to also catalyze primer extension after primer synthesis. May also play a role in DNA repair. The chain is DNA primase small subunit PriS from Thermoplasma acidophilum (strain ATCC 25905 / DSM 1728 / JCM 9062 / NBRC 15155 / AMRC-C165).